Here is a 274-residue protein sequence, read N- to C-terminus: NAD(P)H dehydrogenase [quinone] 1 (274 aa).

Position 2 is an N-acetylalanine (alanine 2). FAD is bound by residues histidine 12, 18 to 19, and glutamine 67; that span reads FN. Serine 82 is subject to Phosphoserine. An FAD-binding site is contributed by 104–107; the sequence is LYWF. A substrate-binding site is contributed by 126–128; that stretch reads AYT. Residues 148–151, tyrosine 156, and arginine 201 each bind FAD; that span reads TTGG. The segment at 225 to 274 is important for apoenzyme conformational stability; it reads PSSLFDLNFQAGFLLKKEVQEEQKKNKFGLSVGHHLGKSIPADNQIKARK. Residue lysine 251 forms a Glycyl lysine isopeptide (Lys-Gly) (interchain with G-Cter in SUMO2) linkage.

This sequence belongs to the NAD(P)H dehydrogenase (quinone) family. As to quaternary structure, homodimer. Interacts with PDLIM4 isoform 2; this interaction stabilizes PDLIM4 isoform 2 in response to oxidative stress and protects it from ubiquitin-independent degradation by the core 20S proteasome. Interacts with TP73 (via SAM domain); this interaction is NADH-dependent, stabilizes TP73 in response to oxidative stress and protects it from ubiquitin-independent degradation by the 20S proteasome. Interacts with TP53; this interaction is NADH-dependent, stabilizes TP53 in response to oxidative stress and protects it from ubiquitin-independent degradation by the 20S proteasome. FAD serves as cofactor.

The protein resides in the cytoplasm. Its subcellular location is the cytosol. The enzyme catalyses a quinone + NADH + H(+) = a quinol + NAD(+). It catalyses the reaction a quinone + NADPH + H(+) = a quinol + NADP(+). The catalysed reaction is ubiquinone-10 + NADH + H(+) = ubiquinol-10 + NAD(+). It carries out the reaction menadione + NADH + H(+) = menadiol + NAD(+). In terms of biological role, flavin-containing quinone reductase that catalyzes two-electron reduction of quinones to hydroquinones using either NADH or NADPH as electron donors. In a ping-pong kinetic mechanism, the electrons are sequentially transferred from NAD(P)H to flavin cofactor and then from reduced flavin to the quinone, bypassing the formation of semiquinone and reactive oxygen species. Regulates cellular redox state primarily through quinone detoxification. Reduces components of plasma membrane redox system such as coenzyme Q and vitamin quinones, producing antioxidant hydroquinone forms. In the process may function as superoxide scavenger to prevent hydroquinone oxidation and facilitate excretion. Alternatively, can activate quinones and their derivatives by generating redox reactive hydroquinones with DNA cross-linking antitumor potential. Acts as a gatekeeper of the core 20S proteasome known to degrade proteins with unstructured regions. Upon oxidative stress, interacts with tumor suppressors TP53 and TP73 in a NADH-dependent way and inhibits their ubiquitin-independent degradation by the 20S proteasome. The protein is NAD(P)H dehydrogenase [quinone] 1 (Nqo1) of Rattus norvegicus (Rat).